A 148-amino-acid polypeptide reads, in one-letter code: uncharacterized protein (148 aa).

Residues 22–40 (YFLSLTVVISIIHLFTTCV) traverse the membrane as a helical segment. The interval 43 to 141 (HNHSTHFPYL…YYPISRHYLH (99 aa)) is histidine-rich.

Its subcellular location is the host membrane. This is an uncharacterized protein from African swine fever virus (strain Badajoz 1971 Vero-adapted) (Ba71V).